The chain runs to 200 residues: Cell division protein SepF (200 aa).

Disordered regions lie at residues 35–60 (NLYQ…RWRE) and 170–200 (LHEV…RMAQ). A compositionally biased stretch (polar residues) spans 183-200 (PTGSPNQTWGNETNRMAQ).

It belongs to the SepF family. Homodimer. Interacts with FtsZ.

The protein localises to the cytoplasm. Functionally, cell division protein that is part of the divisome complex and is recruited early to the Z-ring. Probably stimulates Z-ring formation, perhaps through the cross-linking of FtsZ protofilaments. Its function overlaps with FtsA. The protein is Cell division protein SepF of Nostoc punctiforme (strain ATCC 29133 / PCC 73102).